A 289-amino-acid chain; its full sequence is Prepilin leader peptidase/N-methyltransferase (289 aa).

The chain crosses the membrane as a helical span at residues 13 to 33 (AFVLCALVLGLLVGSFLNVVI). Zn(2+) is bound by residues Cys-72, Cys-75, Cys-97, and Cys-100. Transmembrane regions (helical) follow at residues 128 to 148 (FSWQAGAMLLLTWGLLAMSMI), 159 to 179 (LVLPLLWLGLIINSFGLFASL), 183 to 203 (LWGAVVGYLALWSVYWLFKLV), 228 to 248 (VLPLTILLSSVVGAVLGTVML), and 256 to 276 (GTPIPFGPYLAIAGWVALLWG).

Belongs to the peptidase A24 family. Zn(2+) is required as a cofactor.

The protein localises to the cell inner membrane. It carries out the reaction Typically cleaves a -Gly-|-Phe- bond to release an N-terminal, basic peptide of 5-8 residues from type IV prepilin, and then N-methylates the new N-terminal amino group, the methyl donor being S-adenosyl-L-methionine.. Functionally, plays an essential role in type IV pili and type II pseudopili formation by proteolytically removing the leader sequence from substrate proteins and subsequently monomethylating the alpha-amino group of the newly exposed N-terminal phenylalanine. The sequence is that of Prepilin leader peptidase/N-methyltransferase (pilD) from Stutzerimonas stutzeri (Pseudomonas stutzeri).